The chain runs to 221 residues: Carotenogenesis protein CarR (221 aa).

Helical transmembrane passes span 56–76 (LGLLAAVVLLAVGAVTGPLLL), 79–99 (APLLAMLVGTSAVCAWGALSP), 107–127 (LGVGLAVVSAAALVLARGAPH), 136–156 (VCTVSHLAIGVVPLVVALFAL), 166–186 (AVVAGLSVGSTGALLGELACE), and 191–211 (HVLSHHLLAWVVITVVLVVIS).

It localises to the cell inner membrane. Functionally, negative regulator of the carotenoid synthesis regulon. It is probably inactivated by protoporphyrin IX in the presence of blue light. Inactivation of CarR leads to loss of negative control over the carotenogenesis protein CarQ. This is Carotenogenesis protein CarR (carR) from Myxococcus xanthus.